The following is a 247-amino-acid chain: Golgi-associated RAB2 interactor protein 5A (247 aa).

Over residues 1 to 16 (MGPPLWPDLQEPPPPG) the composition is skewed to pro residues. Disordered stretches follow at residues 1–22 (MGPP…SQIR) and 60–92 (GDIA…PTGR).

This sequence belongs to the GARIN family. As to quaternary structure, interacts (via N-terminus) with RAB2B (in GTP-bound form).

Its subcellular location is the golgi apparatus. RAB2B effector protein which promotes cytosolic DNA-induced innate immune responses. Regulates IFN responses against DNA viruses by regulating the CGAS-STING signaling axis. In Homo sapiens (Human), this protein is Golgi-associated RAB2 interactor protein 5A.